We begin with the raw amino-acid sequence, 496 residues long: Legumin (496 aa).

A signal peptide spans 1–21 (MAKLLALSLSFCFLLFGTCFA). Disulfide bonds link C31–C64 and C107–C318. Residues 36–230 (LNALKPDNRI…ALNVNRRIVN (195 aa)) enclose the Cupin type-1 1 domain. The interval 240–311 (EKGAIVKVKG…RGGSKSQRDN (72 aa)) is disordered. Over residues 257 to 269 (PEKEPRQKRGSRQ) the composition is skewed to basic and acidic residues. One can recognise a Cupin type-1 2 domain in the interval 324–453 (QNIGSSSSPD…INVCQKKLLQ (130 aa)).

The protein belongs to the 11S seed storage protein (globulins) family. Hexamer; each subunit is composed of an acidic and a basic chain derived from a single precursor and linked by a disulfide bond.

In terms of biological role, seed storage protein. Alpha-amylase inhibitor. The sequence is that of Legumin from Cicer arietinum (Chickpea).